Reading from the N-terminus, the 586-residue chain is Phosphomethylpyrimidine synthase (586 aa).

The segment at 1-58 (MKQSVSAEQIELKSSLPGSKKVYVDGPREGMKVPMREIEQSDTNGVPNPPIRVYDTSG) is disordered. The span at 22–39 (VYVDGPREGMKVPMREIE) shows a compositional bias: basic and acidic residues. Residues Asn193, Met222, Tyr251, His287, 307 to 309 (SRG), 348 to 351 (DGLR), and Glu387 each bind substrate. Zn(2+) is bound at residue His391. Residue Tyr414 participates in substrate binding. Residue His455 participates in Zn(2+) binding. The [4Fe-4S] cluster site is built by Cys535, Cys538, and Cys543.

The protein belongs to the ThiC family. [4Fe-4S] cluster is required as a cofactor.

The enzyme catalyses 5-amino-1-(5-phospho-beta-D-ribosyl)imidazole + S-adenosyl-L-methionine = 4-amino-2-methyl-5-(phosphooxymethyl)pyrimidine + CO + 5'-deoxyadenosine + formate + L-methionine + 3 H(+). It participates in cofactor biosynthesis; thiamine diphosphate biosynthesis. Its function is as follows. Catalyzes the synthesis of the hydroxymethylpyrimidine phosphate (HMP-P) moiety of thiamine from aminoimidazole ribotide (AIR) in a radical S-adenosyl-L-methionine (SAM)-dependent reaction. In Bacillus anthracis (strain A0248), this protein is Phosphomethylpyrimidine synthase.